The chain runs to 144 residues: uncharacterized protein (144 aa).

2 consecutive transmembrane segments (helical) span residues 10–30 (ILTR…GLGP) and 60–80 (YVFL…AIAV).

It localises to the membrane. This is an uncharacterized protein from Saccharomyces cerevisiae (strain ATCC 204508 / S288c) (Baker's yeast).